The sequence spans 134 residues: Cytochrome b5 (134 aa).

An N-acetylalanine modification is found at alanine 2. N6-acetyllysine occurs at positions 7, 10, and 19. A Cytochrome b5 heme-binding domain is found at 9 to 85 (VKYYTLEEIQ…SKTFIIGELH (77 aa)). Histidine 44 and histidine 68 together coordinate heme. Residues 109 to 131 (WWTNWVIPAISALVVSLMYHFYT) form a helical membrane-spanning segment.

It belongs to the cytochrome b5 family.

Its subcellular location is the endoplasmic reticulum membrane. It is found in the microsome membrane. The protein localises to the cytoplasm. In terms of biological role, cytochrome b5 is a membrane-bound hemoprotein functioning as an electron carrier for several membrane-bound oxygenases. This is Cytochrome b5 (CYB5A) from Sus scrofa (Pig).